Consider the following 49-residue polypeptide: Large ribosomal subunit protein bL33B (49 aa).

It belongs to the bacterial ribosomal protein bL33 family.

This chain is Large ribosomal subunit protein bL33B, found in Bacillus velezensis (strain DSM 23117 / BGSC 10A6 / LMG 26770 / FZB42) (Bacillus amyloliquefaciens subsp. plantarum).